We begin with the raw amino-acid sequence, 806 residues long: Leucine--tRNA ligase (806 aa).

Residues 38–48 (PYPSGEIHMGH) carry the 'HIGH' region motif. The short motif at 572–576 (KMSKS) is the 'KMSKS' region element. K575 is a binding site for ATP.

It belongs to the class-I aminoacyl-tRNA synthetase family.

Its subcellular location is the cytoplasm. The enzyme catalyses tRNA(Leu) + L-leucine + ATP = L-leucyl-tRNA(Leu) + AMP + diphosphate. The protein is Leucine--tRNA ligase of Helicobacter pylori (strain ATCC 700392 / 26695) (Campylobacter pylori).